The following is a 239-amino-acid chain: Ribulose-phosphate 3-epimerase (239 aa).

Ser-9 provides a ligand contact to substrate. Residues His-34, Asp-36, and His-78 each contribute to the a divalent metal cation site. Residue Asp-36 is the Proton acceptor of the active site. Substrate contacts are provided by residues His-78, 154 to 157 (GFGG), 183 to 185 (DGG), and 205 to 207 (GTS). Asp-183 contacts a divalent metal cation. Residue Asp-183 is the Proton donor of the active site.

The protein belongs to the ribulose-phosphate 3-epimerase family. It depends on Co(2+) as a cofactor. The cofactor is Fe(2+). Requires Mn(2+) as cofactor. Zn(2+) is required as a cofactor.

The enzyme catalyses D-ribulose 5-phosphate = D-xylulose 5-phosphate. It functions in the pathway carbohydrate degradation; pentose phosphate pathway; D-xylulose 5-phosphate from D-ribulose 5-phosphate (non-oxidative stage): step 1/1. In terms of biological role, catalyzes the reversible epimerization of D-ribulose 5-phosphate to D-xylulose 5-phosphate. This Eremothecium gossypii (strain ATCC 10895 / CBS 109.51 / FGSC 9923 / NRRL Y-1056) (Yeast) protein is Ribulose-phosphate 3-epimerase (RPE1).